The following is a 1162-amino-acid chain: Carbamoyl phosphate synthase large chain (1162 aa).

Residues 1 to 456 are carboxyphosphate synthetic domain; it reads MPKRTDIKSI…SLQKALRGLE (456 aa). Positions 129, 222, 228, 229, 261, 263, 268, 294, 295, 296, 338, and 352 each coordinate ATP. The ATP-grasp 1 domain maps to 186–381; the sequence is ETEWQLGEVE…IAKVAAKLAV (196 aa). The Mg(2+) site is built by glutamine 338, glutamate 352, and asparagine 354. Residues glutamine 338, glutamate 352, and asparagine 354 each coordinate Mn(2+). The segment at 457-613 is oligomerization domain; sequence TGLTGFDEIA…PFVGQPRSEA (157 aa). The interval 614–1025 is carbamoyl phosphate synthetic domain; the sequence is EVSDRKKVVI…AFAKAQLGAG (412 aa). One can recognise an ATP-grasp 2 domain in the interval 742 to 954; sequence QKLLIKLDLN…IAKVAARIMA (213 aa). The ATP site is built by arginine 778, threonine 838, leucine 840, glutamate 845, glycine 870, isoleucine 871, histidine 872, serine 873, glutamine 913, and glutamate 925. Mg(2+) is bound by residues glutamine 913, glutamate 925, and asparagine 927. The Mn(2+) site is built by glutamine 913, glutamate 925, and asparagine 927. Residues 1026–1162 enclose the MGS-like domain; it reads VELPREGTVF…VRPLQDYFRS (137 aa). The allosteric domain stretch occupies residues 1026-1162; that stretch reads VELPREGTVF…VRPLQDYFRS (137 aa).

It belongs to the CarB family. In terms of assembly, composed of two chains; the small (or glutamine) chain promotes the hydrolysis of glutamine to ammonia, which is used by the large (or ammonia) chain to synthesize carbamoyl phosphate. Tetramer of heterodimers (alpha,beta)4. Requires Mg(2+) as cofactor. The cofactor is Mn(2+).

It carries out the reaction hydrogencarbonate + L-glutamine + 2 ATP + H2O = carbamoyl phosphate + L-glutamate + 2 ADP + phosphate + 2 H(+). It catalyses the reaction hydrogencarbonate + NH4(+) + 2 ATP = carbamoyl phosphate + 2 ADP + phosphate + 2 H(+). Its pathway is amino-acid biosynthesis; L-arginine biosynthesis; carbamoyl phosphate from bicarbonate: step 1/1. The protein operates within pyrimidine metabolism; UMP biosynthesis via de novo pathway; (S)-dihydroorotate from bicarbonate: step 1/3. In terms of biological role, large subunit of the glutamine-dependent carbamoyl phosphate synthetase (CPSase). CPSase catalyzes the formation of carbamoyl phosphate from the ammonia moiety of glutamine, carbonate, and phosphate donated by ATP, constituting the first step of 2 biosynthetic pathways, one leading to arginine and/or urea and the other to pyrimidine nucleotides. The large subunit (synthetase) binds the substrates ammonia (free or transferred from glutamine from the small subunit), hydrogencarbonate and ATP and carries out an ATP-coupled ligase reaction, activating hydrogencarbonate by forming carboxy phosphate which reacts with ammonia to form carbamoyl phosphate. This is Carbamoyl phosphate synthase large chain from Brucella melitensis biotype 1 (strain ATCC 23456 / CCUG 17765 / NCTC 10094 / 16M).